The following is a 398-amino-acid chain: Streptopain (398 aa).

Positions 1–27 (MNKKKLGIRLLSLLALGGFVLANPVFA) are cleaved as a signal peptide. A propeptide spanning residues 28–145 (DQNFARNEKE…TTYAGTAEIK (118 aa)) is cleaved from the precursor. Residue Cys-192 is the Nucleophile of the active site. Cys-192 carries the cysteine methyl disulfide; in zymogen form modification. A protein contacts are provided by Ser-282 and Gly-339. Residue His-340 is the Proton acceptor of the active site. The interval 368–390 (RLDALNPSALGTGGGAGGFNGYQ) is C-terminal active site loop.

This sequence belongs to the peptidase C10 family. As to quaternary structure, monomer. The mature protease is derived from the precursor sequence by cleavage, either in cis via an autocatalytic mechanism, or in trans by mature SpeB or host proteases (trypsin, plasmin or subtilisin). Maturation can involve a number of protein cleavage intermediates. Mature SpeB probably plays the most important role in protein maturation in physiological conditions. In terms of processing, methylthiolation at Cys-192 of the inactive zymogen form is probably involved in the mechanism of secretion of the proteinase into the culture fluid.

The protein localises to the secreted. Its subcellular location is the host extracellular space. The protein resides in the host cytoplasm. It catalyses the reaction Preferential cleavage with hydrophobic residues at P2, P1 and P1'.. Synthesized as an inactive zymogen to protect the intracellular components of the bacteria from proteolytic activity during protein production. Once secreted into the extracellular milieu, cleaved into the active protease: maturation can be mediated in cis by autocatalytic cleavage, or in trans by mature SpeB or host proteases. Protease activity is strongly inhibited by zinc and copper, which prevent its maturation into an active protease: inhibition by metal ions may be required to prevent proteolysis of streptococcal proteins. Cysteine protease that acts as a key streptococcal virulence factor by cleaving host proteins involved in immune response. Triggers inflammation by mediating cleavage of host proteins, which can both promote host pathogenesis by triggering sterile inflammation and/or restrict streptococcal infection, depending on host immune statue and infection site. Cleaves host gasdermin-A (GSDMA) in epithelial cells, promoting GSDMA activation and formation of gasdermin pores, triggering pyroptosis. Pyroptosis triggers the elimination of the infected skin cell, depriving the pathogen of its protective niche, while inducing an inflammatory response. This ultimately prevents bacterial penetration of the epithelial barrier and a subsequent systemic dissemination of the pathogen. Also mediates cleavage of the cytokine precursor interleukin-1 beta (IL1B) to its mature form, resulting in inflammation and septic shock. SpeB-mediated maturation of IL1B plays a dual role depending on infection site: while IL1B inflammatory response prevents bacterial growth during invasive skin infections, it promotes streptococcal infection of the nasopharynx by disrupting colonization resistance mediated by the microbiota. Inhibits host autophagy be catalyzing cleavage and inactivation of key autophagy factors, such as CALCOCO2, NBR1 and SQSTM1. Cleaves and inhibits a number of complement factors, such as C2, C3-beta chain of C3, C4, C5 or SERPING1, thereby promoting evasion of host immunity. May also impair adaptive immunity by catalyzing cleavage and degradation of host immunoglobulins to promote immune system evasion; the relevance of this activity is however unsure in vivo. Catalyzes maturation and release of the peptide hormone bradykinin from the precursor Kininogen-1 (KNG1) to produce hypotension during septic shock. Also involved in bacterial translocation across the host epithelial barrier by mediating cleavage and degradation of host epithelial junction proteins, such as CDH1 and OCLN. Additionally, has been involved in degradation of fibronectin and vitronectin, two host extracellular matrix proteins involved in tissue integrity. Also able to catalyze cleavage and degradation of streptococcal proteins, such as C5a peptidase, EndoS or SmeZ. Degradation of streptococcal proteins is however strictly regulated to preserve integrity of other virulence factors. The chain is Streptopain (speB) from Streptococcus pyogenes serotype M28 (strain MGAS6180).